We begin with the raw amino-acid sequence, 190 residues long: Translation initiation factor IF-3 (190 aa).

It belongs to the IF-3 family. Monomer.

The protein resides in the cytoplasm. In terms of biological role, IF-3 binds to the 30S ribosomal subunit and shifts the equilibrium between 70S ribosomes and their 50S and 30S subunits in favor of the free subunits, thus enhancing the availability of 30S subunits on which protein synthesis initiation begins. This is Translation initiation factor IF-3 from Prochlorococcus marinus subsp. pastoris (strain CCMP1986 / NIES-2087 / MED4).